Here is a 268-residue protein sequence, read N- to C-terminus: Type II methyltransferase M2.DpnII (268 aa).

The protein belongs to the N(4)/N(6)-methyltransferase family. Homodimer.

It catalyses the reaction a 2'-deoxyadenosine in DNA + S-adenosyl-L-methionine = an N(6)-methyl-2'-deoxyadenosine in DNA + S-adenosyl-L-homocysteine + H(+). Its function is as follows. A beta subtype methylase that recognizes the single- or double-stranded sequence 5'-GATC-3', methylates A-2 on one or both strands (respectively), and protects the DNA from cleavage by the DpnII endonuclease. Further methylates DNA that is already methylated at 5'-GATC-3' sites. Essential for establishment of a previously unmethylated plasmid transformed into the cell as single-stranded DNA, enhances plasmid transfer to DpnII-containing strains of Streptococcus pneumoniae. The sequence is that of Type II methyltransferase M2.DpnII from Streptococcus pneumoniae.